The primary structure comprises 217 residues: MWQPATERLQHFQTMLKSKLNVLTLKKEPIPAVLFHEPEAIELCTTTPLMKARTHSGCKVTYLGKVSTTGMQFLSGCTEKPVIELWKKHTLAREDVFPANALLEIRPFQVWLHHLDHKGEATVHMDTFQVARIAYCTADHNVSPNIFAWVYREINDDLSYQMDCHAVQCESKLEAKKLAHAMMEAFKKTFHSMKSDGRIHRSSSSEEASQELESDDG.

Residues Val60–Gly217 enclose the PID domain. The segment at Lys194–Gly217 is disordered. 3 positions are modified to phosphoserine: Ser202, Ser203, and Ser214. A compositionally biased stretch (acidic residues) spans Ala208–Gly217.

In terms of assembly, found in a complex with PID1/PCLI1, LRP1 and CUBNI. Interacts with LRP1 and CUBN.

The protein resides in the cytoplasm. In terms of biological role, increases proliferation of preadipocytes without affecting adipocytic differentiation. This Mus musculus (Mouse) protein is PTB-containing, cubilin and LRP1-interacting protein (Pid1).